Consider the following 411-residue polypeptide: Probable G-protein coupled receptor AH9.1 (411 aa).

Residues 1 to 18 (MLLFLLRRIFDCRYKYKL) are Cytoplasmic-facing. Residues 19–39 (FVKALVLFLTIVYNAGLVHFF) form a helical membrane-spanning segment. The Extracellular portion of the chain corresponds to 40-55 (FRTTSLDDSPEMNHVD). Residues 56–76 (YVAHVIVMPIVLSIGMINQCL) traverse the membrane as a helical segment. At 77–87 (NVCTLLHIRTS) the chain is on the cytoplasmic side. The chain crosses the membrane as a helical span at residues 88-108 (IFLYLKASAIADILSIVAFIP). Topologically, residues 109–131 (FLFRHAKLIDPSWELGMFYHAHL) are extracellular. The helical transmembrane segment at 132–152 (ELPLINALISASALNIVAMTV) threads the bilayer. Topologically, residues 153–176 (DRYVSVCHPIKFFQNNETKPSRRR) are cytoplasmic. The chain crosses the membrane as a helical span at residues 177 to 197 (TMLIIVMIYFIALMIYFPSVF). Residues 198–229 (QKKLGVVTDALTNKTIYTIVRNEDVEALQVFK) lie on the Extracellular side of the membrane. N-linked (GlcNAc...) asparagine glycosylation occurs at Asn210. Residues 230 to 250 (FYLIVRECICRWGPVLLLVIL) form a helical membrane-spanning segment. The Cytoplasmic portion of the chain corresponds to 251 to 299 (NMCVVRGLRKIDKRNWFWRQPSQNSRTETLAQRQLRSPRDDRSRISVLL). Residues 300-320 (FVTSATFIICNIPASVISFFV) traverse the membrane as a helical segment. Residues 321–333 (RRVSGSLFWQIFR) are Extracellular-facing. Residues 334 to 354 (AIANLLQVTSYLYNFYLYALC) traverse the membrane as a helical segment. Residues 355-411 (SSEYRHAFLRLFGCRSSLSPTSTGDSPTVRVSVHGKRCHQAVVLLGNENHENPVDEV) lie on the Cytoplasmic side of the membrane.

The protein belongs to the G-protein coupled receptor 1 family.

The protein localises to the cell membrane. Not known. Putative receptor. The chain is Probable G-protein coupled receptor AH9.1 from Caenorhabditis elegans.